Consider the following 99-residue polypeptide: Aspartyl/glutamyl-tRNA(Asn/Gln) amidotransferase subunit C (99 aa).

It belongs to the GatC family. As to quaternary structure, heterotrimer of A, B and C subunits.

It carries out the reaction L-glutamyl-tRNA(Gln) + L-glutamine + ATP + H2O = L-glutaminyl-tRNA(Gln) + L-glutamate + ADP + phosphate + H(+). The catalysed reaction is L-aspartyl-tRNA(Asn) + L-glutamine + ATP + H2O = L-asparaginyl-tRNA(Asn) + L-glutamate + ADP + phosphate + 2 H(+). Functionally, allows the formation of correctly charged Asn-tRNA(Asn) or Gln-tRNA(Gln) through the transamidation of misacylated Asp-tRNA(Asn) or Glu-tRNA(Gln) in organisms which lack either or both of asparaginyl-tRNA or glutaminyl-tRNA synthetases. The reaction takes place in the presence of glutamine and ATP through an activated phospho-Asp-tRNA(Asn) or phospho-Glu-tRNA(Gln). The protein is Aspartyl/glutamyl-tRNA(Asn/Gln) amidotransferase subunit C of Burkholderia lata (strain ATCC 17760 / DSM 23089 / LMG 22485 / NCIMB 9086 / R18194 / 383).